Reading from the N-terminus, the 243-residue chain is UPF0758 protein Ava_0172 (243 aa).

Positions 113-235 constitute an MPN domain; it reads PIDSPVAAVA…HQSLREVTTL (123 aa). Zn(2+) contacts are provided by His-184, His-186, and Asp-197. The short motif at 184–197 is the JAMM motif element; the sequence is HNHPSGNVEPSPED.

The protein belongs to the UPF0758 family.

This chain is UPF0758 protein Ava_0172, found in Trichormus variabilis (strain ATCC 29413 / PCC 7937) (Anabaena variabilis).